The primary structure comprises 258 residues: SufE-like protein 2, chloroplastic (258 aa).

Positions 1 to 32 (MNTSSSFKALASPPLISTSRPTTKSFPNPRFT) are disordered. A compositionally biased stretch (polar residues) spans 15–32 (LISTSRPTTKSFPNPRFT). The active-site Cysteine persulfide intermediate is C122.

Belongs to the SufE family. Highly expressed in flowers and pollen, and at low levels in roots, leaves and stems.

It localises to the plastid. Its subcellular location is the chloroplast. It functions in the pathway cofactor biosynthesis; iron-sulfur cluster biosynthesis. Participates in cysteine desulfurization mediated by NFS2. Can activate the cysteine desulfurase activity of NFS2 in vitro. Cysteine desulfurization mobilizes sulfur from L-cysteine to yield L-alanine and supplies the inorganic sulfur for iron-sulfur (Fe-S) cluster formation. The protein is SufE-like protein 2, chloroplastic (SUFE2) of Arabidopsis thaliana (Mouse-ear cress).